The chain runs to 63 residues: Cecropin-A (63 aa).

Residues 1–22 (MNFVRILSFVFALVLALGAVSA) form the signal peptide. Positions 23 to 26 (APEP) are excised as a propeptide. At Leu-61 the chain carries Leucine amide.

The protein belongs to the cecropin family. As to expression, highest expression in fat body and hemocytes. Is also expressed in Malpighian tubules and to a much lesser extent in midgut. Not present in silk gland.

The protein localises to the secreted. In terms of biological role, cecropins have lytic and antibacterial activity against several Gram-positive and Gram-negative bacteria. This Bombyx mori (Silk moth) protein is Cecropin-A (CECA).